The primary structure comprises 92 residues: Small ribosomal subunit protein uS19c (92 aa).

Belongs to the universal ribosomal protein uS19 family.

The protein localises to the plastid. Its subcellular location is the chloroplast. Protein S19 forms a complex with S13 that binds strongly to the 16S ribosomal RNA. In Tupiella akineta (Green alga), this protein is Small ribosomal subunit protein uS19c.